The chain runs to 185 residues: Ribosome-recycling factor (185 aa).

Belongs to the RRF family.

It is found in the cytoplasm. Its function is as follows. Responsible for the release of ribosomes from messenger RNA at the termination of protein biosynthesis. May increase the efficiency of translation by recycling ribosomes from one round of translation to another. In Novosphingobium aromaticivorans (strain ATCC 700278 / DSM 12444 / CCUG 56034 / CIP 105152 / NBRC 16084 / F199), this protein is Ribosome-recycling factor.